We begin with the raw amino-acid sequence, 810 residues long: Transmembrane channel-like protein 6 (810 aa).

The disordered stretch occupies residues 1–26 (MAQSLALALDVPETTGDEGLEPSPYE). Topologically, residues 1–205 (MAQSLALALD…GAFSCCSRLR (205 aa)) are lumenal. A compositionally biased stretch (acidic residues) spans 15–26 (TGDEGLEPSPYE). At Thr88 the chain carries Phosphothreonine. Arg93 is modified (omega-N-methylarginine). Asn102 is a glycosylation site (N-linked (GlcNAc...) asparagine). Thr104 is modified (phosphothreonine). Ser136 carries the post-translational modification Phosphoserine. The helical transmembrane segment at 206-226 (YTCMLALHSLGLALLSGLYAA) threads the bilayer. The Cytoplasmic segment spans residues 227–253 (RPWRYALKQIGGQFGSSVLSYFLFLKT). The helical transmembrane segment at 254–274 (LLAFNALMLLPLLAFLVGVQA) threads the bilayer. Residues 275–338 (AFPPDPAGPV…PRLGSLPYNM (64 aa)) are Lumenal-facing. Residue Asn311 is glycosylated (N-linked (GlcNAc...) asparagine). Residues 339 to 359 (PLAYLFTMGATFFLTCIILVY) traverse the membrane as a helical segment. Residues 360-429 (SMSHSFGESY…PRSVCGQLRQ (70 aa)) lie on the Cytoplasmic side of the membrane. A helical membrane pass occupies residues 430–450 (VVVLGLGWLLCLGSTMGCTVA). Residues 451–468 (VLTFSEVMIQRPASGGQG) are Lumenal-facing. A helical membrane pass occupies residues 469–489 (VEALALPLVVSVLNLGASYLF). The Cytoplasmic segment spans residues 490 to 504 (RGLATLERHDSPVLE). The chain crosses the membrane as a helical span at residues 505-525 (VYMAICRNLILKMAVLGVLCY). Residues 526-552 (HWLGRRVATLQGQCWEDFVGQELYRFM) lie on the Lumenal side of the membrane. A helical transmembrane segment spans residues 553–573 (VVDFIFMLLDSLFGELVWRLI). Over 574 to 603 (SEKKLKRGQKPEFDIARNVLDLIYGQTLTW) the chain is Cytoplasmic. A helical transmembrane segment spans residues 604 to 624 (LGVLFSPLLPAVQILRLLFLF). Residues 625-649 (HIKKASLMANCQAPRRPWLASHMST) are Lumenal-facing. The chain crosses the membrane as a helical span at residues 650 to 670 (VFLTLLCFPSFLGAAVFLCYA). The Cytoplasmic segment spans residues 671 to 721 (VWQVRPSSTCGPFRTLNTMYEAGTVWVRRLEHAGSGASWLPWLHHFLVENT). The chain crosses the membrane as a helical span at residues 722-742 (FFLFLASALLLAVIYFNIQVV). Residues 743-810 (KGQRKVICLL…QKEPCNPRSP (68 aa)) lie on the Lumenal side of the membrane. Residues 775–810 (EEEGRSRPGRTQDATEPPAWHEDGGDQKEPCNPRSP) are disordered. Positions 793–810 (AWHEDGGDQKEPCNPRSP) are enriched in basic and acidic residues.

This sequence belongs to the TMC family. In terms of assembly, interacts with TMC8. Interacts and forms a complex with TMC8 and CIB1; the interaction stabilizes each component of the complex. Interacts and forms a complex with TMC8 and SLC30A1/ZNT1; the interaction regulates zinc transport into the ER. Widely expressed. Highly expressed in thymus, lung and spleen. Expressed in lymphocytes and peripheral lymphocytes. Expressed in small and medium dorsal root ganglion (DRG) neurons.

The protein localises to the endoplasmic reticulum membrane. Its function is as follows. Acts as a regulatory protein involved in the regulation of numerous cellular processes. Together with its homolog TMC8/EVER2, forms a complex with calcium-binding protein CIB1 in lymphocytes and keratynocytes where TMC6 and TMC8 stabilize CIB1 and reciprocally. Together with TMC8, also forms a complex with and activates zinc transporter ZNT1 at the ER membrane of keratynocytes, thereby facilitating zinc uptake into the ER. Down-regulates the activity of transcription factors induced by zinc and cytokines. Also plays a role in thermal sensation by inhibiting the M-channel (KCNQ2-KCNQ3 channel) current in primary sensory neurons. The sequence is that of Transmembrane channel-like protein 6 from Mus musculus (Mouse).